A 280-amino-acid polypeptide reads, in one-letter code: Probable endonuclease 4 (280 aa).

Zn(2+) is bound by residues H69, H109, E145, D179, H182, H216, D229, H231, and E261.

It belongs to the AP endonuclease 2 family. Zn(2+) serves as cofactor.

It carries out the reaction Endonucleolytic cleavage to 5'-phosphooligonucleotide end-products.. Functionally, endonuclease IV plays a role in DNA repair. It cleaves phosphodiester bonds at apurinic or apyrimidinic (AP) sites, generating a 3'-hydroxyl group and a 5'-terminal sugar phosphate. The polypeptide is Probable endonuclease 4 (Aliarcobacter butzleri (strain RM4018) (Arcobacter butzleri)).